Reading from the N-terminus, the 243-residue chain is DNA repair protein RecO (243 aa).

The protein belongs to the RecO family.

In terms of biological role, involved in DNA repair and RecF pathway recombination. This is DNA repair protein RecO from Hyphomonas neptunium (strain ATCC 15444).